A 250-amino-acid chain; its full sequence is Ribonuclease PH (250 aa).

Phosphate-binding positions include R86 and 124–126; that span reads GTR.

Belongs to the RNase PH family. As to quaternary structure, homohexameric ring arranged as a trimer of dimers.

It catalyses the reaction tRNA(n+1) + phosphate = tRNA(n) + a ribonucleoside 5'-diphosphate. Functionally, phosphorolytic 3'-5' exoribonuclease that plays an important role in tRNA 3'-end maturation. Removes nucleotide residues following the 3'-CCA terminus of tRNAs; can also add nucleotides to the ends of RNA molecules by using nucleoside diphosphates as substrates, but this may not be physiologically important. Probably plays a role in initiation of 16S rRNA degradation (leading to ribosome degradation) during starvation. The sequence is that of Ribonuclease PH from Exiguobacterium sibiricum (strain DSM 17290 / CCUG 55495 / CIP 109462 / JCM 13490 / 255-15).